Consider the following 428-residue polypeptide: GTPase Obg (428 aa).

Positions 1 to 158 (MFVDQVKVYV…RYIVLELKVL (158 aa)) constitute an Obg domain. Residues 117–143 (AKGGRGGRGNTRFATPANPAPQLSEHG) are disordered. Residues 159–329 (ADVGLVGFPS…LLFEVANQLE (171 aa)) form the OBG-type G domain. GTP contacts are provided by residues 165 to 172 (GFPSVGKS), 190 to 194 (FTTLV), 212 to 215 (DLPG), 282 to 285 (NKMD), and 310 to 312 (SAV). The Mg(2+) site is built by serine 172 and threonine 192. The region spanning 350-428 (TMEDEEIPFN…LLEFEFEFID (79 aa)) is the OCT domain.

This sequence belongs to the TRAFAC class OBG-HflX-like GTPase superfamily. OBG GTPase family. As to quaternary structure, monomer. It depends on Mg(2+) as a cofactor.

The protein resides in the cytoplasm. In terms of biological role, an essential GTPase which binds GTP, GDP and possibly (p)ppGpp with moderate affinity, with high nucleotide exchange rates and a fairly low GTP hydrolysis rate. Plays a role in control of the cell cycle, stress response, ribosome biogenesis and in those bacteria that undergo differentiation, in morphogenesis control. The chain is GTPase Obg from Bacillus velezensis (strain DSM 23117 / BGSC 10A6 / LMG 26770 / FZB42) (Bacillus amyloliquefaciens subsp. plantarum).